Here is a 208-residue protein sequence, read N- to C-terminus: Small ribosomal subunit protein uS4 (208 aa).

The S4 RNA-binding domain occupies 98–160; that stretch reads CRLDNVVYRM…AKKQSRIQLA (63 aa).

Belongs to the universal ribosomal protein uS4 family. As to quaternary structure, part of the 30S ribosomal subunit. Contacts protein S5. The interaction surface between S4 and S5 is involved in control of translational fidelity.

In terms of biological role, one of the primary rRNA binding proteins, it binds directly to 16S rRNA where it nucleates assembly of the body of the 30S subunit. With S5 and S12 plays an important role in translational accuracy. The sequence is that of Small ribosomal subunit protein uS4 from Ruthia magnifica subsp. Calyptogena magnifica.